Here is a 389-residue protein sequence, read N- to C-terminus: S-adenosylmethionine synthase (389 aa).

Histidine 17 contacts ATP. Aspartate 19 is a binding site for Mg(2+). Residue glutamate 45 coordinates K(+). Glutamate 58 and glutamine 101 together coordinate L-methionine. A flexible loop region spans residues 101–111 (QSPDIAQGVTE). ATP contacts are provided by residues 168–170 (DSK), 234–235 (RF), aspartate 243, 249–250 (RK), alanine 266, and lysine 270. Aspartate 243 serves as a coordination point for L-methionine. Lysine 274 contributes to the L-methionine binding site.

This sequence belongs to the AdoMet synthase family. Homotetramer; dimer of dimers. Mg(2+) is required as a cofactor. It depends on K(+) as a cofactor.

The protein resides in the cytoplasm. The catalysed reaction is L-methionine + ATP + H2O = S-adenosyl-L-methionine + phosphate + diphosphate. Its pathway is amino-acid biosynthesis; S-adenosyl-L-methionine biosynthesis; S-adenosyl-L-methionine from L-methionine: step 1/1. Its function is as follows. Catalyzes the formation of S-adenosylmethionine (AdoMet) from methionine and ATP. The overall synthetic reaction is composed of two sequential steps, AdoMet formation and the subsequent tripolyphosphate hydrolysis which occurs prior to release of AdoMet from the enzyme. The sequence is that of S-adenosylmethionine synthase from Geotalea uraniireducens (strain Rf4) (Geobacter uraniireducens).